The chain runs to 657 residues: Forkhead box protein O3 (657 aa).

Disordered stretches follow at residues 1–71 (MAEA…EGAA) and 216–320 (SSWW…ELDD). A DNA-binding region (fork-head) is located at residues 142–236 (WGNMSYADLI…KGGKAPRRRA (95 aa)). Positions 246–257 (TKSRGRAAKKKA) are enriched in basic residues. Over residues 268-283 (DSPSQLSKWPGSPTSR) the composition is skewed to polar residues. A compositionally biased stretch (basic and acidic residues) spans 284–296 (SSDKLDTWTDFRS). Residues 297–307 (RTNSNASTISG) show a composition bias toward polar residues.

Post-translationally, dephosphorylation may promote translocation to the nucleus where the protein induces transcription of target genes and triggers apoptosis. As to expression, localized to the animal hemisphere during early cleavage stages. At the late neurula, localized in the anterior neural plate, neural crest cells and in the hatching gland. As development progresses, expression becomes less localized, being observed in a variety of organs and tissues including the head, branchial arches and somites by stage 32.

It is found in the cytoplasm. It localises to the cytosol. The protein localises to the nucleus. Functionally, transcriptional activator that recognizes and binds to the DNA sequence 5'-[AG]TAAA[TC]A-3' and regulates different processes, such as apoptosis and autophagy. Acts as a positive regulator of autophagy in skeletal muscle: in starved cells, enters the nucleus following dephosphorylation and binds the promoters of autophagy genes, thereby activating their expression, resulting in proteolysis of skeletal muscle proteins. Triggers apoptosis in the absence of survival factors, including neuronal cell death upon oxidative stress. In response to metabolic stress, translocates into the mitochondria where it promotes mtDNA transcription. Also acts as a key regulator of chondrogenic commitment of skeletal progenitor cells in response to lipid availability: when lipids levels are low, translocates to the nucleus and promotes expression of sox9, which induces chondrogenic commitment and suppresses fatty acid oxidation. Also acts as a key regulator of regulatory T-cells (Treg) differentiation. This chain is Forkhead box protein O3, found in Xenopus laevis (African clawed frog).